A 655-amino-acid polypeptide reads, in one-letter code: Squalene-tetrahymanol cyclase THC1 (655 aa).

A signal peptide spans 1-20; sequence MKKILIGLIIGLFLFSSVNA. N-linked (GlcNAc...) asparagine glycans are attached at residues Asn-23, Asn-44, Asn-69, and Asn-77. Asp-373 acts as the Proton donor in catalysis. PFTB repeat units follow at residues 393-435 and 515-562; these read IPET…GIAN and VQNS…GLLA.

Belongs to the terpene cyclase/mutase family.

It localises to the membrane. The catalysed reaction is tetrahymanol = squalene + H2O. With respect to regulation, 2,3-iminosqualene and N,N-dimethyldodecylamine~N-oxlde are effective inhibitors with IC(50) values of 50 and 30 nM, respectively. Functionally, squalene cyclase that catalyzes the oxygen-independent cyclization of squalene into tetrahymanol, a triterpenoid sterol with five cyclohexyl rings that is involved in membrane integrity, permeability and fluidity. The protein is Squalene-tetrahymanol cyclase THC1 of Tetrahymena thermophila (strain SB210).